The chain runs to 157 residues: Protein Smg homolog (157 aa).

This sequence belongs to the Smg family.

In Pseudoalteromonas translucida (strain TAC 125), this protein is Protein Smg homolog.